The sequence spans 729 residues: Polyribonucleotide nucleotidyltransferase (729 aa).

The tract at residues 399 to 419 is disordered; that stretch reads YMHNYNFPPYSTGETGRVGSP. The Mg(2+) site is built by D509 and D515. Positions 575–634 constitute a KH domain; sequence PRVISVKIPVDKIGEVIGPKGKMINQIQADSGAEITVEDDGTIYIGAADGPAAETARSAI. Residues 646-718 form the S1 motif domain; that stretch reads GERYLGTIVK…ARGKISLAPG (73 aa).

Belongs to the polyribonucleotide nucleotidyltransferase family. The cofactor is Mg(2+).

It localises to the cytoplasm. It carries out the reaction RNA(n+1) + phosphate = RNA(n) + a ribonucleoside 5'-diphosphate. Functionally, involved in mRNA degradation. Catalyzes the phosphorolysis of single-stranded polyribonucleotides processively in the 3'- to 5'-direction. The chain is Polyribonucleotide nucleotidyltransferase from Parafrankia sp. (strain EAN1pec).